The sequence spans 104 residues: N(4)-acetylcytidine amidohydrolase (104 aa).

Positions 6 to 94 (ITFFQRFQND…IAEIYPNQTQ (89 aa)) constitute an ASCH domain. K21 functions as the Proton acceptor in the catalytic mechanism. T24 functions as the Nucleophile in the catalytic mechanism. E74 acts as the Proton donor in catalysis.

It belongs to the N(4)-acetylcytidine amidohydrolase family.

The catalysed reaction is N(4)-acetylcytidine + H2O = cytidine + acetate + H(+). The enzyme catalyses N(4)-acetyl-2'-deoxycytidine + H2O = 2'-deoxycytidine + acetate + H(+). It catalyses the reaction N(4)-acetylcytosine + H2O = cytosine + acetate + H(+). Its function is as follows. Catalyzes the hydrolysis of N(4)-acetylcytidine (ac4C). This is N(4)-acetylcytidine amidohydrolase (yqfB) from Salmonella agona (strain SL483).